The sequence spans 335 residues: Phospholipid scramblase 1 (335 aa).

The segment at 1 to 101 is proline-rich domain (PRD); sequence MEKHGPPEHA…NHPGGPGGTP (101 aa). The tract at residues 1–102 is disordered; the sequence is MEKHGPPEHA…HPGGPGGTPW (102 aa). At 1-305 the chain is on the cytoplasmic side; that stretch reads MEKHGPPEHA…IQFPLDLDVK (305 aa). 6 tandem repeats follow at residues 23–29, 30–36, 37–43, 44–50, 51–57, and 58–64. Residues 23 to 71 are 7 X 7 AA tandem repeats of Q-G-P-Y-[AP]-G-P; it reads QGPYPGPQGPYPGPQGPYAGPQGPYPGPQGPYAGPQGPYPGPQPGYPVP. Over residues 26–37 the composition is skewed to pro residues; sequence YPGPQGPYPGPQ. Residues 59-72 show a composition bias toward pro residues; that stretch reads GPYPGPQPGYPVPP. The short motif at 64-72 is the SH3-binding 1 element; the sequence is PQPGYPVPP. One copy of the 7; approximate repeat lies at 65–71; it reads QPGYPVP. Tyr91 carries the phosphotyrosine; by ABL modification. Residues 101–109 carry the SH3-binding 2 motif; it reads PWMQAPPPP. Thr178 carries the phosphothreonine; by PKC/PRKCD modification. 4 S-palmitoyl cysteine lipidation sites follow: Cys201, Cys202, Cys205, and Cys206. Positions 274–283 match the Nuclear localization signal motif; that stretch reads GKISKQWSGF. The chain crosses the membrane as a helical span at residues 306-322; it reads MKAVMLGACFLIDFMFF. Topologically, residues 323–335 are extracellular; the sequence is ERTGNEEQRSGVW.

This sequence belongs to the phospholipid scramblase family. In terms of assembly, forms homooligomers in the presence of calcium. Interacts with ABL. Interacts with RELT, RELL1 and RELL2. Interacts with OXSR1 in the presence of RELT. Interacts with OCLN, TOP2A and TOP2B. Interacts with TRPC1, TRPC4 and TRPC5. Interacts with ILDR1. The cofactor is Ca(2+). Requires Mg(2+) as cofactor. Zn(2+) is required as a cofactor. Phosphorylated on tyrosine residues. Phosphorylated by OXSR1 in the presence of RELT. Phosphorylation at Thr-178 by PKC/PKCD increases its phospholipid scramblase activity during both cell stimulation and apoptosis. In terms of processing, palmitoylation is required for its phospholipid scramblase activity. Palmitoylation regulates its localization to the cell membrane or the nucleus; trafficking to the cell membrane is dependent upon palmitoylation whereas in the absence of palmitoylation, localizes to the nucleus.

The protein localises to the cell membrane. It is found in the nucleus. Its subcellular location is the cytoplasm. The protein resides in the perinuclear region. The catalysed reaction is a 1,2-diacyl-sn-glycero-3-phosphocholine(in) = a 1,2-diacyl-sn-glycero-3-phosphocholine(out). The enzyme catalyses a 1,2-diacyl-sn-glycero-3-phosphoethanolamine(in) = a 1,2-diacyl-sn-glycero-3-phosphoethanolamine(out). It carries out the reaction a 1,2-diacyl-sn-glycero-3-phospho-L-serine(in) = a 1,2-diacyl-sn-glycero-3-phospho-L-serine(out). Its function is as follows. Catalyzes calcium-induced ATP-independent rapid bidirectional and non-specific distribution of phospholipids (lipid scrambling or lipid flip-flop) between the inner and outer leaflet of the plasma membrane resulting in collapse of the phospholipid asymmetry which leads to phosphatidylserine externalization on the cell surface. Mediates calcium-dependent phosphatidylserine externalization and apoptosis in neurons via its association with TRPC5. Also exhibits magnesium-dependent nuclease activity against double-stranded DNA and RNA but not single-stranded DNA and can enhance DNA decatenation mediated by TOP2A. Negatively regulates FcR-mediated phagocytosis in differentiated macrophages. May contribute to cytokine-regulated cell proliferation and differentiation. In Rattus norvegicus (Rat), this protein is Phospholipid scramblase 1 (Plscr1).